We begin with the raw amino-acid sequence, 215 residues long: Glutathione S-transferase F10 (215 aa).

Positions 2 to 81 constitute a GST N-terminal domain; sequence VLTIYAPLFA…YIAEKYRSQG (80 aa). Glutathione-binding positions include 11-12, 39-40, 52-53, and 65-66; these read AS, QR, KI, and ES. Positions 88–215 constitute a GST C-terminal domain; the sequence is TIEERGQVEQ…EVSAKYSLPV (128 aa).

Belongs to the GST superfamily. Phi family. Interacts with BAK1. Expressed in roots, stems, floral buds, mature flowers and leaves.

The protein localises to the cytoplasm. It localises to the cytosol. The enzyme catalyses RX + glutathione = an S-substituted glutathione + a halide anion + H(+). Its function is as follows. In vitro, possesses glutathione S-transferase activity toward 1-chloro-2,4-dinitrobenzene (CDNB) and benzyl isothiocyanate (BITC). May be involved in the conjugation of reduced glutathione to a wide number of exogenous and endogenous hydrophobic electrophiles and have a detoxification role against certain herbicides. The sequence is that of Glutathione S-transferase F10 from Arabidopsis thaliana (Mouse-ear cress).